A 442-amino-acid polypeptide reads, in one-letter code: MVDSDPVEFPPENRRGQLFGKYEVGKLVGCGAFAKVYHGRSTATGQSVAIKVVSKQRLQKGGLNGNIQREIAIMHRLRHPSIVRLFEVLATKSKIFFVMEFAKGGELFAKVSKGRFCEDLSRRYFQQLISAVGYCHSRGIFHRDLKPENLLLDEKLDLKISDFGLSALTDQIRPDGLLHTLCGTPAYVAPEVLAKKGYDGAKIDIWSCGIILFVLNAGYLPFNDHNLMVMYRKIYKGEFRIPKWTSPDLRRLLTRLLDTNPQTRITIEEIIHDPWFKQGYDDRMSKFHLEDSDMKLPADETDSEMGARRMNAFDIISGSPGFNLSGLFGDARKYDRVERFVSAWTAERVVERLEEIVSAENLTVAKKETWGMKIEGQKGNFAMVVEINQLTDELVMIEVRKRQRAAASGRDLWTDTLRPFFVELVHESDQTDPEPTQVHTTS.

Residues 22 to 276 (YEVGKLVGCG…IEEIIHDPWF (255 aa)) form the Protein kinase domain. Residues 28 to 36 (VGCGAFAKV) and lysine 51 contribute to the ATP site. The active-site Proton acceptor is aspartate 144. Positions 162–191 (DFGLSALTDQIRPDGLLHTLCGTPAYVAPE) are activation loop. Phosphoserine is present on serine 166. Threonine 180 carries the phosphothreonine modification. The NAF domain occupies 305 to 329 (MGARRMNAFDIISGSPGFNLSGLFG). Residues 335-365 (DRVERFVSAWTAERVVERLEEIVSAENLTVA) form a PPI region.

This sequence belongs to the protein kinase superfamily. CAMK Ser/Thr protein kinase family. SNF1 subfamily. Interacts with CBL2. Interacts with CBL3. Interacts with CBL8. Interacts with CBL9. Interacts with KIN10 and KIN11. The cofactor is Mn(2+). Predominant in roots, cauline leaves, and flowers. Ubiquitous with highest expression in 7-day-old seedlings and flower buds, followed by that in cauline leaves and young siliques.

It localises to the cytoplasm. Its subcellular location is the nucleus. It catalyses the reaction L-seryl-[protein] + ATP = O-phospho-L-seryl-[protein] + ADP + H(+). The catalysed reaction is L-threonyl-[protein] + ATP = O-phospho-L-threonyl-[protein] + ADP + H(+). Its function is as follows. CIPK serine-threonine protein kinases interact with CBL proteins. Binding of a CBL protein to the regulatory NAF domain of CIPK protein lead to the activation of the kinase in a calcium-dependent manner. The polypeptide is CBL-interacting serine/threonine-protein kinase 14 (CIPK14) (Arabidopsis thaliana (Mouse-ear cress)).